Consider the following 310-residue polypeptide: Zinc-finger homeodomain protein 3 (310 aa).

The disordered stretch occupies residues 1–64 (MEIASQEDPI…GLGKNHDHSH (64 aa)). Residues 39–56 (LNITTSNPLLVSSNSNGL) are compositionally biased toward polar residues. The ZF-HD dimerization-type; degenerate zinc finger occupies 87 to 136 (YKECLKNHAATMGGNAIDGCGEFMPSGEEGSIEALTCSVCNCHRNFHRRE). 2 disordered regions span residues 184–220 (TAGSNSESEDLMEEEGGGSLTFRQPPPPPSPYSYGHN) and 281–310 (LSKKSNNVSNNVDLSAGNNDITENLASTNP). Positions 190–199 (ESEDLMEEEG) are enriched in acidic residues. The segment at residues 222 to 285 (KKRFRTKFTQ…NNKQNLSKKS (64 aa)) is a DNA-binding region (homeobox). The segment covering 281 to 291 (LSKKSNNVSNN) has biased composition (low complexity). The segment covering 292–310 (VDLSAGNNDITENLASTNP) has biased composition (polar residues).

As to quaternary structure, homo- and heterodimer with other ZFHD proteins. Interacts with MIF2 and MIF3; these interactions prevent nuclear localization and DNA-binding to inhibit transcription regulation activity. Binds to ZHD1, ZHD2 and ZHD11. Interacts with HIPP30. Interacts with KIN10, KIN11 and FLZ8. As to expression, mostly expressed in flowers and inflorescence.

It is found in the nucleus. In terms of biological role, putative transcription factor. The polypeptide is Zinc-finger homeodomain protein 3 (ZHD3) (Arabidopsis thaliana (Mouse-ear cress)).